The primary structure comprises 360 residues: DNA replication and repair protein RecF (360 aa).

Residue 30-37 (GQNGSGKT) participates in ATP binding.

This sequence belongs to the RecF family.

The protein resides in the cytoplasm. In terms of biological role, the RecF protein is involved in DNA metabolism; it is required for DNA replication and normal SOS inducibility. RecF binds preferentially to single-stranded, linear DNA. It also seems to bind ATP. This Shewanella frigidimarina (strain NCIMB 400) protein is DNA replication and repair protein RecF.